Reading from the N-terminus, the 377-residue chain is Putative glutamate--cysteine ligase 2 (377 aa).

The protein belongs to the glutamate--cysteine ligase type 2 family. YbdK subfamily.

The catalysed reaction is L-cysteine + L-glutamate + ATP = gamma-L-glutamyl-L-cysteine + ADP + phosphate + H(+). In terms of biological role, ATP-dependent carboxylate-amine ligase which exhibits weak glutamate--cysteine ligase activity. The chain is Putative glutamate--cysteine ligase 2 from Chromobacterium violaceum (strain ATCC 12472 / DSM 30191 / JCM 1249 / CCUG 213 / NBRC 12614 / NCIMB 9131 / NCTC 9757 / MK).